The sequence spans 1392 residues: Ankyrin repeat domain-containing protein 30B (1392 aa).

Residues 1–21 are disordered; sequence MKRLLAAAGKGVRGPEPPNPF. ANK repeat units lie at residues 72–101, 105–134, 138–167, 171–200, and 204–233; these read KKRT…QLNV, EGRT…DLNY, YGNT…VIEV, ASLT…NANA, and SKCT…DVFA. Disordered stretches follow at residues 265–292, 558–587, 636–656, 671–690, 830–877, and 904–926; these read PKNP…ERTP, AQMF…VSQK, DRET…PTCG, RETL…PTCG, KEGA…SDSE, and GKIE…QNSV. Polar residues-rich tracts occupy residues 267 to 280 and 576 to 586; these read NPQN…STGT and DSESPCETVSQ. Basic and acidic residues predominate over residues 636–650; that stretch reads DRETFKAESPDKDGL. The span at 830 to 840 shows a compositional bias: polar residues; it reads KEGATKTVTGQ. 2 stretches are compositionally biased toward basic and acidic residues: residues 864 to 874 and 904 to 915; these read LGRKEDTKSTS and GKIEESPEKPSH. Coiled coils occupy residues 960-1168 and 1270-1318; these read RELK…KQDK and ETQC…QQLV.

Expressed in brain, breast and testis.

The chain is Ankyrin repeat domain-containing protein 30B (ANKRD30B) from Homo sapiens (Human).